Consider the following 355-residue polypeptide: Guanine nucleotide-binding protein G(i) subunit alpha-2 (355 aa).

Gly2 carries the N-myristoyl glycine lipid modification. Cys3 is lipidated: S-palmitoyl cysteine. Residues 32 to 355 (REVKLLLLGA…KNNLKDCGLF (324 aa)) form the G-alpha domain. Residues 35–48 (KLLLLGAGESGKST) are G1 motif. GTP-binding positions include 40 to 47 (GAGESGKS), 176 to 182 (LRTRVKT), 201 to 205 (DVGGQ), 270 to 273 (NKKD), and Ala327. Mg(2+) contacts are provided by Ser47 and Thr182. The G2 motif stretch occupies residues 174–182 (DVLRTRVKT). The interval 197 to 206 (FKMFDVGGQR) is G3 motif. Residues 266–273 (ILFLNKKD) are G4 motif. The G5 motif stretch occupies residues 325-330 (TCATDT).

It belongs to the G-alpha family. G(i/o/t/z) subfamily. As to quaternary structure, g proteins are composed of 3 units; alpha, beta and gamma. The alpha chain contains the guanine nucleotide binding site.

The protein localises to the cytoplasm. Its subcellular location is the cytoskeleton. It localises to the microtubule organizing center. The protein resides in the centrosome. It is found in the cell membrane. Its function is as follows. Guanine nucleotide-binding proteins (G proteins) are involved as modulators or transducers in various transmembrane signaling systems. The G(i) proteins are involved in hormonal regulation of adenylate cyclase: they inhibit the cyclase in response to beta-adrenergic stimuli. May play a role in cell division. In Gallus gallus (Chicken), this protein is Guanine nucleotide-binding protein G(i) subunit alpha-2 (GNAI2).